The sequence spans 212 residues: External core antigen (212 aa).

Positions 1–19 (MQLFHLCLIISCSCPTVQA) are cleaved as a signal peptide. Residues 25 to 27 (GWL) are HBEAG. The tract at residues 165-212 (NAPILSTLPETTVVRRRGRSPRRRTPSPRRRRSQSPRRRRSQSRESQC) is disordered. Residues 178–205 (VRRRGRSPRRRTPSPRRRRSQSPRRRRS) are compositionally biased toward basic residues. Residues 184–190 (SPRRRTP) form a 1; half-length repeat. Residues 184–206 (SPRRRTPSPRRRRSQSPRRRRSQ) form a 3 X 8 AA repeats of S-P-R-R-R-R-S-Q region. Residues 184-212 (SPRRRTPSPRRRRSQSPRRRRSQSRESQC) constitute a propeptide that is removed on maturation. 2 tandem repeats follow at residues 191-198 (SPRRRRSQ) and 199-206 (SPRRRRSQ).

The protein belongs to the orthohepadnavirus precore antigen family. Homodimerizes. Post-translationally, phosphorylated. In terms of processing, cleaved by host furin.

Its subcellular location is the secreted. It is found in the host nucleus. May regulate immune response to the intracellular capsid in acting as a T-cell tolerogen, by having an immunoregulatory effect which prevents destruction of infected cells by cytotoxic T-cells. This immune regulation may predispose to chronicity during perinatal infections and prevent severe liver injury during adult infections. The sequence is that of External core antigen from Homo sapiens (Human).